The primary structure comprises 572 residues: Receptor-type adenylate cyclase GRESAG 4.2 (572 aa).

The Extracellular portion of the chain corresponds to R1–Q225. N-linked (GlcNAc...) asparagine glycosylation is found at N10, N77, and N152. The chain crosses the membrane as a helical span at residues L226 to M251. At R252 to Q572 the chain is on the cytoplasmic side. The Guanylate cyclase domain occupies T269 to E424. The Mg(2+) site is built by D274 and D317.

Belongs to the adenylyl cyclase class-3 family. Mg(2+) serves as cofactor.

Its subcellular location is the cell membrane. It catalyses the reaction ATP = 3',5'-cyclic AMP + diphosphate. Could act as a receptor for an unknown ligand. The chain is Receptor-type adenylate cyclase GRESAG 4.2 (GRESAG 4.2) from Trypanosoma brucei brucei.